Consider the following 126-residue polypeptide: Late histone H2A.L3 (126 aa).

Positions 1–20 are disordered; sequence MSGRGKGAGKARAKAKSRSA. At Ser2 the chain carries N-acetylserine. Ser2 bears the Phosphoserine mark. The segment covering 7–19 has biased composition (basic residues); it reads GAGKARAKAKSRS. Gln105 is subject to N5-methylglutamine. A Glycyl lysine isopeptide (Lys-Gly) (interchain with G-Cter in ubiquitin) cross-link involves residue Lys120.

The protein belongs to the histone H2A family. The nucleosome is a histone octamer containing two molecules each of H2A, H2B, H3 and H4 assembled in one H3-H4 heterotetramer and two H2A-H2B heterodimers. The octamer wraps approximately 147 bp of DNA. In terms of processing, monoubiquitination of Lys-120 gives a specific tag for epigenetic transcriptional repression. Post-translationally, phosphorylation of Ser-2 directly represses transcription.

Its subcellular location is the nucleus. The protein resides in the chromosome. Its function is as follows. Core component of nucleosome. Nucleosomes wrap and compact DNA into chromatin, limiting DNA accessibility to the cellular machineries which require DNA as a template. Histones thereby play a central role in transcription regulation, DNA repair, DNA replication and chromosomal stability. DNA accessibility is regulated via a complex set of post-translational modifications of histones, also called histone code, and nucleosome remodeling. The chain is Late histone H2A.L3 from Strongylocentrotus purpuratus (Purple sea urchin).